Reading from the N-terminus, the 132-residue chain is Ribosome-binding factor A (132 aa).

Belongs to the RbfA family. As to quaternary structure, monomer. Binds 30S ribosomal subunits, but not 50S ribosomal subunits or 70S ribosomes.

The protein localises to the cytoplasm. Functionally, one of several proteins that assist in the late maturation steps of the functional core of the 30S ribosomal subunit. Associates with free 30S ribosomal subunits (but not with 30S subunits that are part of 70S ribosomes or polysomes). Required for efficient processing of 16S rRNA. May interact with the 5'-terminal helix region of 16S rRNA. The protein is Ribosome-binding factor A of Prochlorococcus marinus (strain MIT 9515).